Here is a 235-residue protein sequence, read N- to C-terminus: Large ribosomal subunit protein bL25 (235 aa).

Disordered stretches follow at residues 1–21 (MADN…PARR) and 210–235 (APAA…GAKK). Positions 210–222 (APAAGAAPAAGGE) are enriched in low complexity. Residues 223-235 (AAKKAPEAKGAKK) show a composition bias toward basic and acidic residues.

Belongs to the bacterial ribosomal protein bL25 family. CTC subfamily. As to quaternary structure, part of the 50S ribosomal subunit; part of the 5S rRNA/L5/L18/L25 subcomplex. Contacts the 5S rRNA. Binds to the 5S rRNA independently of L5 and L18.

This is one of the proteins that binds to the 5S RNA in the ribosome where it forms part of the central protuberance. The chain is Large ribosomal subunit protein bL25 from Anaeromyxobacter sp. (strain Fw109-5).